A 636-amino-acid polypeptide reads, in one-letter code: 1-deoxy-D-xylulose-5-phosphate synthase (636 aa).

Thiamine diphosphate-binding positions include H72 and 113–115 (GHA). Position 144 (D144) interacts with Mg(2+). Residues 145-146 (GA), N174, Y287, and E370 each bind thiamine diphosphate. N174 is a binding site for Mg(2+).

This sequence belongs to the transketolase family. DXPS subfamily. As to quaternary structure, homodimer. It depends on Mg(2+) as a cofactor. Requires thiamine diphosphate as cofactor.

The catalysed reaction is D-glyceraldehyde 3-phosphate + pyruvate + H(+) = 1-deoxy-D-xylulose 5-phosphate + CO2. It functions in the pathway metabolic intermediate biosynthesis; 1-deoxy-D-xylulose 5-phosphate biosynthesis; 1-deoxy-D-xylulose 5-phosphate from D-glyceraldehyde 3-phosphate and pyruvate: step 1/1. Its function is as follows. Catalyzes the acyloin condensation reaction between C atoms 2 and 3 of pyruvate and glyceraldehyde 3-phosphate to yield 1-deoxy-D-xylulose-5-phosphate (DXP). In Rippkaea orientalis (strain PCC 8801 / RF-1) (Cyanothece sp. (strain PCC 8801)), this protein is 1-deoxy-D-xylulose-5-phosphate synthase.